The following is a 189-amino-acid chain: GTP cyclohydrolase 1 (189 aa).

Cysteine 78, histidine 81, and cysteine 150 together coordinate Zn(2+).

The protein belongs to the GTP cyclohydrolase I family. As to quaternary structure, homomer.

The enzyme catalyses GTP + H2O = 7,8-dihydroneopterin 3'-triphosphate + formate + H(+). Its pathway is cofactor biosynthesis; 7,8-dihydroneopterin triphosphate biosynthesis; 7,8-dihydroneopterin triphosphate from GTP: step 1/1. The polypeptide is GTP cyclohydrolase 1 (Listeria monocytogenes serotype 4b (strain CLIP80459)).